We begin with the raw amino-acid sequence, 336 residues long: GTPase Obg (336 aa).

Residues 1-159 (MKFVDEATLI…KTLKLELKLL (159 aa)) form the Obg domain. Residues 160 to 329 (ADVGLVGLPN…LIEAIFAQLR (170 aa)) enclose the OBG-type G domain. GTP-binding positions include 166–173 (GLPNAGKS), 191–195 (FTTLA), 213–216 (DIPG), 283–286 (NKMD), and 310–312 (SAI). 2 residues coordinate Mg(2+): Ser-173 and Thr-193.

It belongs to the TRAFAC class OBG-HflX-like GTPase superfamily. OBG GTPase family. Monomer. Mg(2+) serves as cofactor.

The protein localises to the cytoplasm. Functionally, an essential GTPase which binds GTP, GDP and possibly (p)ppGpp with moderate affinity, with high nucleotide exchange rates and a fairly low GTP hydrolysis rate. Plays a role in control of the cell cycle, stress response, ribosome biogenesis and in those bacteria that undergo differentiation, in morphogenesis control. This chain is GTPase Obg, found in Desulfatibacillum aliphaticivorans.